The primary structure comprises 248 residues: Pyridoxine 5'-phosphate synthase (248 aa).

Asn-12 serves as a coordination point for 3-amino-2-oxopropyl phosphate. 14–15 (DH) contributes to the 1-deoxy-D-xylulose 5-phosphate binding site. Position 23 (Arg-23) interacts with 3-amino-2-oxopropyl phosphate. The active-site Proton acceptor is the His-48. 2 residues coordinate 1-deoxy-D-xylulose 5-phosphate: Arg-50 and His-55. Glu-75 serves as the catalytic Proton acceptor. Residue Thr-105 participates in 1-deoxy-D-xylulose 5-phosphate binding. Catalysis depends on His-196, which acts as the Proton donor. 3-amino-2-oxopropyl phosphate contacts are provided by residues Gly-197 and 218–219 (GH).

Belongs to the PNP synthase family. In terms of assembly, homooctamer; tetramer of dimers.

It is found in the cytoplasm. The catalysed reaction is 3-amino-2-oxopropyl phosphate + 1-deoxy-D-xylulose 5-phosphate = pyridoxine 5'-phosphate + phosphate + 2 H2O + H(+). It participates in cofactor biosynthesis; pyridoxine 5'-phosphate biosynthesis; pyridoxine 5'-phosphate from D-erythrose 4-phosphate: step 5/5. Its function is as follows. Catalyzes the complicated ring closure reaction between the two acyclic compounds 1-deoxy-D-xylulose-5-phosphate (DXP) and 3-amino-2-oxopropyl phosphate (1-amino-acetone-3-phosphate or AAP) to form pyridoxine 5'-phosphate (PNP) and inorganic phosphate. The chain is Pyridoxine 5'-phosphate synthase from Pseudomonas paraeruginosa (strain DSM 24068 / PA7) (Pseudomonas aeruginosa (strain PA7)).